The following is a 424-amino-acid chain: Probable methyltransferase EP424R (424 aa).

Positions 103–315 (QIVTNAWLKM…TYIVGKNRLR (213 aa)) constitute an Adrift-type SAM-dependent 2'-O-MTase domain. The S-adenosyl-L-methionine site is built by glycine 135 and aspartate 228. Lysine 268 acts as the Proton acceptor in catalysis.

It localises to the virion. The sequence is that of Probable methyltransferase EP424R from Ornithodoros (relapsing fever ticks).